The sequence spans 351 residues: Ion-translocating oxidoreductase complex subunit D (351 aa).

4 helical membrane-spanning segments follow: residues 18–38, 42–62, 87–107, and 121–141; these read IMLLVILACIPGIIAQTYFFG, LIQVALAIMTAVLAEGAVLHL, LPPLAPWWMIVLGTAFAIIIA, and PAMVGYVVLLISFPVQMTSWL. Position 185 is an FMN phosphoryl threonine (threonine 185). A run of 5 helical transmembrane segments spans residues 212–232, 241–261, 264–284, 298–318, and 320–340; these read LAGIGWQWINLGFLAGGLLLL, IPVSFLLALAGCAAISWMIAP, FAPPMLHLFSGATMLGAFFIA, LIFGALIGILVWLIRVYGGYP, and GVAFAVLLANICVPLIDHYTQ.

Belongs to the NqrB/RnfD family. In terms of assembly, the complex is composed of six subunits: RnfA, RnfB, RnfC, RnfD, RnfE and RnfG. FMN serves as cofactor.

The protein resides in the cell inner membrane. Functionally, part of a membrane-bound complex that couples electron transfer with translocation of ions across the membrane. The chain is Ion-translocating oxidoreductase complex subunit D from Yersinia enterocolitica serotype O:8 / biotype 1B (strain NCTC 13174 / 8081).